Reading from the N-terminus, the 160-residue chain is MQADPQENQVRTTVDIARIIDMIPHRYPFLMVDKLIDMVRGESAIGIKNVTINEPFFQGHFPNRPVMPGVLIVEAMAQTAAVLVVETLGVRAEGKIVYFMIVENARFRKPVIPGDQLRLHVAKERHRGNVWKFRGVAKVDEVVVAEATFAAMIMDEEPQP.

H60 is an active-site residue.

It belongs to the thioester dehydratase family. FabZ subfamily.

Its subcellular location is the cytoplasm. It catalyses the reaction a (3R)-hydroxyacyl-[ACP] = a (2E)-enoyl-[ACP] + H2O. Functionally, involved in unsaturated fatty acids biosynthesis. Catalyzes the dehydration of short chain beta-hydroxyacyl-ACPs and long chain saturated and unsaturated beta-hydroxyacyl-ACPs. The protein is 3-hydroxyacyl-[acyl-carrier-protein] dehydratase FabZ of Rhodospirillum rubrum (strain ATCC 11170 / ATH 1.1.1 / DSM 467 / LMG 4362 / NCIMB 8255 / S1).